A 204-amino-acid chain; its full sequence is Large ribosomal subunit protein uL3c (204 aa).

Positions 126 to 155 are disordered; that stretch reads HNFTRGPMTHGSKNHREPGSIGQGSTPAKV.

The protein belongs to the universal ribosomal protein uL3 family. As to quaternary structure, part of the 50S ribosomal subunit.

The protein localises to the plastid. It is found in the chloroplast. One of the primary rRNA binding proteins, it binds directly near the 3'-end of the 23S rRNA, where it nucleates assembly of the 50S subunit. The polypeptide is Large ribosomal subunit protein uL3c (rpl3) (Guillardia theta (Cryptophyte)).